We begin with the raw amino-acid sequence, 226 residues long: Thymidylate kinase (226 aa).

Position 20-27 (20-27 (GGEGAGKS)) interacts with ATP.

Belongs to the thymidylate kinase family.

It carries out the reaction dTMP + ATP = dTDP + ADP. In terms of biological role, phosphorylation of dTMP to form dTDP in both de novo and salvage pathways of dTTP synthesis. The polypeptide is Thymidylate kinase (Bradyrhizobium sp. (strain ORS 278)).